Here is a 304-residue protein sequence, read N- to C-terminus: Pyridoxal 5'-phosphate synthase subunit PdxS (304 aa).

Residue aspartate 34 coordinates D-ribose 5-phosphate. Lysine 91 serves as the catalytic Schiff-base intermediate with D-ribose 5-phosphate. Position 163 (glycine 163) interacts with D-ribose 5-phosphate. Arginine 175 contributes to the D-glyceraldehyde 3-phosphate binding site. Residues glycine 224 and 245-246 contribute to the D-ribose 5-phosphate site; that span reads GS.

This sequence belongs to the PdxS/SNZ family. In the presence of PdxT, forms a dodecamer of heterodimers.

It catalyses the reaction aldehydo-D-ribose 5-phosphate + D-glyceraldehyde 3-phosphate + L-glutamine = pyridoxal 5'-phosphate + L-glutamate + phosphate + 3 H2O + H(+). It functions in the pathway cofactor biosynthesis; pyridoxal 5'-phosphate biosynthesis. Functionally, catalyzes the formation of pyridoxal 5'-phosphate from ribose 5-phosphate (RBP), glyceraldehyde 3-phosphate (G3P) and ammonia. The ammonia is provided by the PdxT subunit. Can also use ribulose 5-phosphate and dihydroxyacetone phosphate as substrates, resulting from enzyme-catalyzed isomerization of RBP and G3P, respectively. In Streptomyces avermitilis (strain ATCC 31267 / DSM 46492 / JCM 5070 / NBRC 14893 / NCIMB 12804 / NRRL 8165 / MA-4680), this protein is Pyridoxal 5'-phosphate synthase subunit PdxS.